Reading from the N-terminus, the 207-residue chain is Probable GTP-binding protein EngB (207 aa).

One can recognise an EngB-type G domain in the interval 24 to 199 (GGYEVAFAGR…RGIVGGWLGL (176 aa)). GTP contacts are provided by residues 32–39 (GRSNAGKS), 59–63 (GRTQQ), 77–80 (DLPG), 144–147 (TKAD), and 178–180 (YSG). The Mg(2+) site is built by Ser39 and Thr61.

Belongs to the TRAFAC class TrmE-Era-EngA-EngB-Septin-like GTPase superfamily. EngB GTPase family. Requires Mg(2+) as cofactor.

Functionally, necessary for normal cell division and for the maintenance of normal septation. This is Probable GTP-binding protein EngB from Xanthomonas oryzae pv. oryzae (strain MAFF 311018).